The following is a 663-amino-acid chain: Translation factor GUF1, mitochondrial (663 aa).

The transit peptide at 1-37 (MRGCLQSVRLLTTALGQSPRRPLPFAFRLPPNASRLF) directs the protein to the mitochondrion. The 181-residue stretch at 65–245 (ERYRNFCIVA…TIVEQIPAPI (181 aa)) folds into the tr-type G domain. GTP-binding positions include 74-81 (AHVDHGKS), 138-142 (DTPGH), and 192-195 (NKVD).

The protein belongs to the TRAFAC class translation factor GTPase superfamily. Classic translation factor GTPase family. LepA subfamily.

It localises to the mitochondrion inner membrane. It catalyses the reaction GTP + H2O = GDP + phosphate + H(+). Its function is as follows. Promotes mitochondrial protein synthesis. May act as a fidelity factor of the translation reaction, by catalyzing a one-codon backward translocation of tRNAs on improperly translocated ribosomes. Binds to mitochondrial ribosomes in a GTP-dependent manner. The sequence is that of Translation factor GUF1, mitochondrial from Uncinocarpus reesii (strain UAMH 1704).